We begin with the raw amino-acid sequence, 292 residues long: Putative FNIP repeat-containing protein L281 (292 aa).

An FNIP repeat occupies 95 to 134 (FNKSIDDIPSTITHLSLGAAFNGEVSNIPTSVTHLKLGVS).

In Acanthamoeba polyphaga mimivirus (APMV), this protein is Putative FNIP repeat-containing protein L281.